A 235-amino-acid polypeptide reads, in one-letter code: Urease accessory protein UreF (235 aa).

Belongs to the UreF family. UreD, UreF and UreG form a complex that acts as a GTP-hydrolysis-dependent molecular chaperone, activating the urease apoprotein by helping to assemble the nickel containing metallocenter of UreC. The UreE protein probably delivers the nickel.

Its subcellular location is the cytoplasm. Required for maturation of urease via the functional incorporation of the urease nickel metallocenter. The polypeptide is Urease accessory protein UreF (Pseudoalteromonas translucida (strain TAC 125)).